The primary structure comprises 331 residues: Tryptophan--tRNA ligase (331 aa).

Residues 10–12 and 18–19 each bind ATP; these read QPS and GN. Residues 11–19 carry the 'HIGH' region motif; that stretch reads PSGQLTLGN. Asp-133 contacts L-tryptophan. ATP contacts are provided by residues 145 to 147, Val-184, and 193 to 197; these read GED and KMSKS. Positions 193–197 match the 'KMSKS' region motif; it reads KMSKS.

The protein belongs to the class-I aminoacyl-tRNA synthetase family. Homodimer.

Its subcellular location is the cytoplasm. It carries out the reaction tRNA(Trp) + L-tryptophan + ATP = L-tryptophyl-tRNA(Trp) + AMP + diphosphate + H(+). Functionally, catalyzes the attachment of tryptophan to tRNA(Trp). The polypeptide is Tryptophan--tRNA ligase (Listeria monocytogenes serovar 1/2a (strain ATCC BAA-679 / EGD-e)).